The primary structure comprises 1480 residues: Cystic fibrosis transmembrane conductance regulator (1480 aa).

Residues 1 to 77 (MQRSPLEKAS…KLINALRRCF (77 aa)) lie on the Cytoplasmic side of the membrane. Residues 78–98 (FWRFMFYGILLYLGEVTKAVQ) form a helical membrane-spanning segment. Residues 81–365 (FMFYGILLYL…WAVQTWYDSL (285 aa)) enclose the ABC transmembrane type-1 1 domain. At 99-122 (PLLLGRIIASYDPDNKTERSIAIY) the chain is on the extracellular side. The chain crosses the membrane as a helical span at residues 123–146 (LGIGLCLLFIVRTLLLHPAIFGLH). Residues 147 to 195 (HIGMQMRIAMFSLIYKKTLKLSSRVLDKISIGQLVSLLSNNLNKFDEGL) are Cytoplasmic-facing. A helical transmembrane segment spans residues 196–216 (ALAHFVWIAPLQVALLMGLIW). Over 217–222 (ELLQAS) the chain is Extracellular. Residues 223 to 243 (AFCGLGFLIVLALFQAGLGRM) form a helical membrane-spanning segment. Over 244-298 (MMKYRDQRAGKINERLVITSEMIENIQSVKAYCWEEAMEKMIENLRQTELKLTRK) the chain is Cytoplasmic. The chain crosses the membrane as a helical span at residues 299–319 (AAYVRYFNSSAFFFSGFFVVF). The Extracellular segment spans residues 320–339 (LSVLPYALIKGIVLRKIFTT). Residues 340–358 (ISFCIVLRMAVTRQFPWAV) form a helical membrane-spanning segment. Residues 359–858 (QTWYDSLGAI…YLRYITLHKS (500 aa)) lie on the Cytoplasmic side of the membrane. ATP-binding positions include Trp401, Ser434, 458 to 465 (GSTGAGKT), and Gln493. An ABC transporter 1 domain is found at 423–646 (NGDDNLFFSN…RPDFSSKLMG (224 aa)). Cys524 carries the S-palmitoyl cysteine lipid modification. Phosphoserine occurs at positions 549 and 660. The segment at 654 to 831 (SSERRNSILT…EEINEEDLKE (178 aa)) is disordered R region. Residue Ser670 is modified to Phosphoserine; by PKA. Ser686 carries the post-translational modification Phosphoserine. Lys688 participates in a covalent cross-link: Glycyl lysine isopeptide (Lys-Gly) (interchain with G-Cter in ubiquitin). Phosphoserine occurs at positions 700 and 712. The residue at position 717 (Thr717) is a Phosphothreonine. 6 positions are modified to phosphoserine: Ser737, Ser753, Ser768, Ser790, Ser795, and Ser813. A helical membrane pass occupies residues 859–879 (LIFVLIWCLVIFLAEVAASLV). One can recognise an ABC transmembrane type-1 2 domain in the interval 859–1155 (LIFVLIWCLV…AVNSSIDVDS (297 aa)). The Extracellular portion of the chain corresponds to 880–918 (VLWFLGNTPFQDKGNSTYSRNNSYAVIITNTSSYYVFYI). 3 N-linked (GlcNAc...) asparagine glycosylation sites follow: Asn894, Asn900, and Asn909. A discontinuously helical transmembrane segment spans residues 919-939 (YVGVADTLLALGFFRGLPLVH). At 940 to 990 (TLITVSKILHHKMLHSVLQAPMSTLNTLKAGGILNRFSKDIAILDDLLPLT) the chain is on the cytoplasmic side. Residues 991–1011 (IFDFIQLLLIVIGAIAVVSVL) traverse the membrane as a helical segment. Over 1012–1013 (QP) the chain is Extracellular. The chain crosses the membrane as a helical span at residues 1014–1034 (YILLATVPVIAAFILLRAYFL). The Cytoplasmic segment spans residues 1035-1095 (QTSQQLKQLE…TANWFLYLAT (61 aa)). The helical transmembrane segment at 1096–1116 (LRWFQMRIEIIFVIFFIAVTF) threads the bilayer. Residues 1117–1130 (ISILTTGEGEGTVG) are Extracellular-facing. A helical membrane pass occupies residues 1131–1151 (IILTLAMNIMSTLQWAVNSSI). Topologically, residues 1152 to 1480 (DVDSLMRSVS…TEEEVQETRL (329 aa)) are cytoplasmic. The region spanning 1210–1443 (MTIKDLTAKY…KSLFQQAISH (234 aa)) is the ABC transporter 2 domain. ATP-binding positions include Tyr1219 and 1244-1251 (GRTGSGKS). The interval 1386-1480 (RALKQAFADC…TEEEVQETRL (95 aa)) is interaction with GORASP2. Cys1395 carries the S-palmitoyl cysteine lipid modification. Phosphoserine is present on residues Ser1444 and Ser1456. The interval 1452 to 1480 (HRNSSKYKSPPQIASLKEETEEEVQETRL) is disordered. Residues 1470 to 1480 (ETEEEVQETRL) are compositionally biased toward acidic residues. Positions 1478–1480 (TRL) match the PDZ-binding motif.

Belongs to the ABC transporter superfamily. ABCC family. CFTR transporter (TC 3.A.1.202) subfamily. Monomer; does not require oligomerization for channel activity. May form oligomers in the membrane. Interacts with SLC26A3, SLC26A6 and NHERF1. Interacts with SHANK2. Interacts with MYO6. Interacts (via C-terminus) with GOPC (via PDZ domain); this promotes CFTR internalization and thereby decreases channel activity. Interacts with SLC4A7 through NHERF1. Found in a complex with MYO5B and RAB11A. Interacts with ANO1. Interacts with SLC26A8. Interacts with AHCYL1; the interaction increases CFTR activity. Interacts with CSE1L. The core-glycosylated form interacts with GORASP2 (via PDZ GRASP-type 1 domain) in respone to ER stress. Interacts with MARCHF2; the interaction leads to CFTR ubiqtuitination and degradation. Interacts with ADGRG2. N-glycosylated. In terms of processing, phosphorylated; cAMP treatment promotes phosphorylation and activates the channel. Dephosphorylation decreases the ATPase activity (in vitro). Phosphorylation at PKA sites activates the channel. Phosphorylation at PKC sites enhances the response to phosphorylation by PKA. Phosphorylated by AMPK; this inhibits channel activity. Post-translationally, ubiquitinated, leading to its degradation in the lysosome. Deubiquitination by USP10 in early endosomes enhances its endocytic recycling to the cell membrane. Ubiquitinated by RNF185 during ER stress. Ubiquitinated by MARCHF2.

It localises to the apical cell membrane. It is found in the early endosome membrane. The protein localises to the cell membrane. Its subcellular location is the recycling endosome membrane. The protein resides in the endoplasmic reticulum membrane. It localises to the nucleus. It carries out the reaction ATP + H2O + closed Cl(-) channel = ADP + phosphate + open Cl(-) channel.. The catalysed reaction is chloride(in) = chloride(out). The enzyme catalyses hydrogencarbonate(in) = hydrogencarbonate(out). It catalyses the reaction ATP + H2O = ADP + phosphate + H(+). Epithelial ion channel that plays an important role in the regulation of epithelial ion and water transport and fluid homeostasis. Mediates the transport of chloride ions across the cell membrane. Possesses an intrinsic ATPase activity and utilizes ATP to gate its channel; the passive flow of anions through the channel is gated by cycles of ATP binding and hydrolysis by the ATP-binding domains. The ion channel is also permeable to HCO(3)(-); selectivity depends on the extracellular chloride concentration. Exerts its function also by modulating the activity of other ion channels and transporters. Contributes to the regulation of the pH and the ion content of the epithelial fluid layer. Modulates the activity of the epithelial sodium channel (ENaC) complex, in part by regulating the cell surface expression of the ENaC complex. May regulate bicarbonate secretion and salvage in epithelial cells by regulating the transporter SLC4A7. Can inhibit the chloride channel activity of ANO1. Plays a role in the chloride and bicarbonate homeostasis during sperm epididymal maturation and capacitation. This Ateles geoffroyi (Black-handed spider monkey) protein is Cystic fibrosis transmembrane conductance regulator.